Here is a 118-residue protein sequence, read N- to C-terminus: Fluoride-specific ion channel FluC 2 (118 aa).

The next 4 membrane-spanning stretches (helical) occupy residues 1 to 21 (MIEA…RFAI), 33 to 53 (FPIA…YIIG), 55 to 75 (GVTT…FTTF), and 93 to 113 (TFLL…FLGM). Na(+)-binding residues include G70 and T73.

The protein belongs to the fluoride channel Fluc/FEX (TC 1.A.43) family.

It localises to the cell membrane. The catalysed reaction is fluoride(in) = fluoride(out). With respect to regulation, na(+) is not transported, but it plays an essential structural role and its presence is essential for fluoride channel function. In terms of biological role, fluoride-specific ion channel. Important for reducing fluoride concentration in the cell, thus reducing its toxicity. The protein is Fluoride-specific ion channel FluC 2 of Bacillus thuringiensis subsp. konkukian (strain 97-27).